A 366-amino-acid chain; its full sequence is MTPEHLPTEQYEAQLAEKVARLQSMMAPFSGLVPEVFRSPVSHYRMRAEFRLWHDGDDLYHIMFDQQTKSRIRVDTFPAASQLINTLMKAMIAGVRDNHALRHKLFQIDYLTTLSNQAVVSLLYHKKLDEEWREAATALRDALRAQGLNVHLIGRATKTKIELDQDYIDERLPVAGKEMIYRQVENSFTQPNAAMNIQMLEWALEVTKDSKGDLLELYCGNGNFSLALARNFDRVLATEIAKPSVAAAQYNIAANHIDNVQIIRMAAEEFTQAMNGVREFNRLQGIDLKRYQCETIFVDPPRSGLDSETEKMVQAYPRILYISCNPETLCKNLETLSQTHTVSRLALFDQFPYTHHMECGVLLTAR.

Residues glutamine 190, tyrosine 218, asparagine 223, glutamate 239, and aspartate 299 each contribute to the S-adenosyl-L-methionine site. Catalysis depends on cysteine 324, which acts as the Nucleophile. Catalysis depends on glutamate 358, which acts as the Proton acceptor.

The protein belongs to the class I-like SAM-binding methyltransferase superfamily. RNA M5U methyltransferase family. TrmA subfamily.

It catalyses the reaction uridine(54) in tRNA + S-adenosyl-L-methionine = 5-methyluridine(54) in tRNA + S-adenosyl-L-homocysteine + H(+). The enzyme catalyses uridine(341) in tmRNA + S-adenosyl-L-methionine = 5-methyluridine(341) in tmRNA + S-adenosyl-L-homocysteine + H(+). Functionally, dual-specificity methyltransferase that catalyzes the formation of 5-methyluridine at position 54 (m5U54) in all tRNAs, and that of position 341 (m5U341) in tmRNA (transfer-mRNA). This is tRNA/tmRNA (uracil-C(5))-methyltransferase from Salmonella agona (strain SL483).